We begin with the raw amino-acid sequence, 430 residues long: tRNA-2-methylthio-N(6)-dimethylallyladenosine synthase (430 aa).

The 110-residue stretch at 2-111 (KKIHIKTYGC…IPQAVERAIN (110 aa)) folds into the MTTase N-terminal domain. Residues Cys11, Cys47, Cys76, Cys147, Cys151, and Cys154 each contribute to the [4Fe-4S] cluster site. The Radical SAM core domain occupies 133-364 (RNSKHHAWIT…LNLQKEINKQ (232 aa)). Residues 367–428 (ENYLNKTVEI…AGPLYGDIIK (62 aa)) enclose the TRAM domain.

It belongs to the methylthiotransferase family. MiaB subfamily. As to quaternary structure, monomer. [4Fe-4S] cluster serves as cofactor.

The protein localises to the cytoplasm. It carries out the reaction N(6)-dimethylallyladenosine(37) in tRNA + (sulfur carrier)-SH + AH2 + 2 S-adenosyl-L-methionine = 2-methylsulfanyl-N(6)-dimethylallyladenosine(37) in tRNA + (sulfur carrier)-H + 5'-deoxyadenosine + L-methionine + A + S-adenosyl-L-homocysteine + 2 H(+). In terms of biological role, catalyzes the methylthiolation of N6-(dimethylallyl)adenosine (i(6)A), leading to the formation of 2-methylthio-N6-(dimethylallyl)adenosine (ms(2)i(6)A) at position 37 in tRNAs that read codons beginning with uridine. The sequence is that of tRNA-2-methylthio-N(6)-dimethylallyladenosine synthase from Thermosipho melanesiensis (strain DSM 12029 / CIP 104789 / BI429).